We begin with the raw amino-acid sequence, 387 residues long: Protein kinase ORF16 (387 aa).

Residues 82–381 enclose the Protein kinase domain; sequence KKILSRVGPE…VTLMTELSLL (300 aa). Lys-122 provides a ligand contact to ATP. The active-site Proton acceptor is the Asp-226.

This sequence belongs to the protein kinase superfamily. Ser/Thr protein kinase family.

The enzyme catalyses L-seryl-[protein] + ATP = O-phospho-L-seryl-[protein] + ADP + H(+). It carries out the reaction L-threonyl-[protein] + ATP = O-phospho-L-threonyl-[protein] + ADP + H(+). The chain is Protein kinase ORF16 (ORF16) from Ictalurid herpesvirus 1 (strain Auburn) (IcHV-1).